A 448-amino-acid polypeptide reads, in one-letter code: N-succinylarginine dihydrolase (448 aa).

Substrate is bound by residues 19-28, Asn-110, and 137-138; these read GGLSYGNVAS and HR. Glu-174 is a catalytic residue. Arg-214 is a substrate binding site. Residue His-250 is part of the active site. Asp-252 and Asn-365 together coordinate substrate. Cys-371 functions as the Nucleophile in the catalytic mechanism.

The protein belongs to the succinylarginine dihydrolase family. In terms of assembly, homodimer.

The enzyme catalyses N(2)-succinyl-L-arginine + 2 H2O + 2 H(+) = N(2)-succinyl-L-ornithine + 2 NH4(+) + CO2. It functions in the pathway amino-acid degradation; L-arginine degradation via AST pathway; L-glutamate and succinate from L-arginine: step 2/5. Catalyzes the hydrolysis of N(2)-succinylarginine into N(2)-succinylornithine, ammonia and CO(2). The chain is N-succinylarginine dihydrolase from Ectopseudomonas mendocina (strain ymp) (Pseudomonas mendocina).